The chain runs to 216 residues: Adenylate kinase (216 aa).

Position 11–16 (11–16) interacts with ATP; the sequence is GSGKGT. The segment at 31 to 60 is NMP; that stretch reads ATGDLFRKAIECGDELGDTVKSYMERGELV. Residues threonine 32, arginine 37, 58–60, 86–89, and glutamine 93 each bind AMP; these read ELV and GFPR. The tract at residues 127-163 is LID; sequence GRWVCRSCQSPYQSGCAEVTKGKCSRCQGGLYQRPDD. Residue arginine 128 coordinates ATP. Residues cysteine 131, cysteine 134, cysteine 150, and cysteine 153 each coordinate Zn(2+). Positions 160 and 171 each coordinate AMP. Position 199 (alanine 199) interacts with ATP.

It belongs to the adenylate kinase family. In terms of assembly, monomer.

The protein localises to the cytoplasm. The catalysed reaction is AMP + ATP = 2 ADP. The protein operates within purine metabolism; AMP biosynthesis via salvage pathway; AMP from ADP: step 1/1. Catalyzes the reversible transfer of the terminal phosphate group between ATP and AMP. Plays an important role in cellular energy homeostasis and in adenine nucleotide metabolism. This is Adenylate kinase from Dehalococcoides mccartyi (strain CBDB1).